Here is a 608-residue protein sequence, read N- to C-terminus: Serine/threonine-protein kinase ROP17 (608 aa).

A signal peptide spans Met-1–Ala-21. Asn-76 carries an N-linked (GlcNAc...) asparagine glycan. One can recognise a Protein kinase domain in the interval Leu-283–Leu-579. Residues Leu-289–Val-297 and Lys-312 contribute to the ATP site. The Proton acceptor role is filled by Asp-436.

It belongs to the protein kinase superfamily. Ser/Thr protein kinase family. In terms of assembly, interacts with ROP5; interaction with ROP5 does not affect kinase activity. Interacts with human BCL2; the interaction probably promotes BCL2 phosphorylation and degradation.

It is found in the secreted. It localises to the cytoplasmic vesicle. The protein localises to the secretory vesicle. The protein resides in the rhoptry. Its subcellular location is the parasitophorous vacuole membrane. The catalysed reaction is L-threonyl-[protein] + ATP = O-phospho-L-threonyl-[protein] + ADP + H(+). The enzyme catalyses L-seryl-[protein] + ATP = O-phospho-L-seryl-[protein] + ADP + H(+). In terms of biological role, protein kinase. Virulence factor. Promotes migration of Toxoplasma-infected macrophages through collagen matrix, facilitating parasite transport through tissues and systemic dissemination. Plays a role in the translocation of dense granule effectors, such as GRA16 and GRA24, across the parasitophorous vacuole membrane in Toxoplasma-infected host cells. Phosphorylates mouse IRGB6 (TGTP1/TGTP2), an immunity-related GTPase (IRG) that protects mice from infection by certain intracellular pathogens; the phosphorylation leads to the disassembly of IRGB6 polymers into monomers and dimers. May modulate gene expression in human cells. Promotes autophagy in human cells via modulation of the BCL2-BECN1 pathway. In Toxoplasma gondii, this protein is Serine/threonine-protein kinase ROP17.